We begin with the raw amino-acid sequence, 230 residues long: Transcriptional regulatory protein CitT (230 aa).

The region spanning 6–124 is the Response regulatory domain; that stretch reads KVLIIEDDFR…VLHQRLDAYV (119 aa). The residue at position 59 (Asp-59) is a 4-aspartylphosphate. The H-T-H motif DNA-binding region spans 184-203; it reads AMEGARLIGASRSTVRRYFE.

Post-translationally, phosphorylated by CitS.

Its subcellular location is the cytoplasm. Member of the two-component regulatory system CitT/CitS. The protein is Transcriptional regulatory protein CitT (citT) of Halalkalibacterium halodurans (strain ATCC BAA-125 / DSM 18197 / FERM 7344 / JCM 9153 / C-125) (Bacillus halodurans).